The following is a 245-amino-acid chain: DNA polymerase sliding clamp (245 aa).

Belongs to the PCNA family. Homotrimer. The subunits circularize to form a toroid; DNA passes through its center. Replication factor C (RFC) is required to load the toroid on the DNA.

Functionally, sliding clamp subunit that acts as a moving platform for DNA processing. Responsible for tethering the catalytic subunit of DNA polymerase and other proteins to DNA during high-speed replication. This is DNA polymerase sliding clamp from Methanococcoides burtonii (strain DSM 6242 / NBRC 107633 / OCM 468 / ACE-M).